We begin with the raw amino-acid sequence, 365 residues long: GTPase Obg (365 aa).

The 159-residue stretch at 1 to 159 folds into the Obg domain; that stretch reads MKFIDEARIE…RMLKLELKVL (159 aa). The region spanning 160-334 is the OBG-type G domain; that stretch reads ADVGLLGMPN…LVYAIKDHLA (175 aa). GTP-binding positions include 166–173, 191–195, 213–216, 284–287, and 315–317; these read GMPNAGKS, FTTLH, DIPG, NKLD, and SAL. The Mg(2+) site is built by S173 and T193.

It belongs to the TRAFAC class OBG-HflX-like GTPase superfamily. OBG GTPase family. In terms of assembly, monomer. It depends on Mg(2+) as a cofactor.

It localises to the cytoplasm. Functionally, an essential GTPase which binds GTP, GDP and possibly (p)ppGpp with moderate affinity, with high nucleotide exchange rates and a fairly low GTP hydrolysis rate. Plays a role in control of the cell cycle, stress response, ribosome biogenesis and in those bacteria that undergo differentiation, in morphogenesis control. The protein is GTPase Obg of Cupriavidus metallidurans (strain ATCC 43123 / DSM 2839 / NBRC 102507 / CH34) (Ralstonia metallidurans).